Consider the following 1381-residue polypeptide: Regulator of G-protein signaling 12 (1381 aa).

The PDZ domain maps to 21–98; the sequence is SVEVARGRAG…VLHMVIAEGT (78 aa). Phosphoserine occurs at positions 171 and 194. A Glycyl lysine isopeptide (Lys-Gly) (interchain with G-Cter in SUMO2) cross-link involves residue K195. A PID domain is found at 223 to 390; it reads SILNVAMVVG…VLQFISVLYR (168 aa). Disordered stretches follow at residues 409–428, 442–528, and 620–644; these read ADAH…IGNF, LGGG…GAAG, and RKTK…SQRT. Over residues 412-428 the composition is skewed to polar residues; the sequence is HQNNSTSSNSDSGIGNF. R524 and R633 each carry omega-N-methylarginine. 2 positions are modified to phosphoserine: S661 and S671. Positions 715-832 constitute an RGS domain; the sequence is SFERLLQDPV…LKSQLYQECV (118 aa). The tract at residues 842–942 is disordered; that stretch reads PDSQQVPSSP…ESQGSVSSAG (101 aa). The span at 849 to 869 shows a compositional bias: low complexity; sequence SSPASKHSISSDHSNVSTPKK. Phosphoserine occurs at positions 850 and 879. Basic and acidic residues predominate over residues 914–923; the sequence is DHGDHAHDAP. Phosphoserine is present on S943. 2 consecutive RBD domains span residues 962 to 1032 and 1034 to 1104; these read KHCC…LEKR and LFRL…LEER. The span at 1102–1117 shows a compositional bias: basic and acidic residues; that stretch reads EERDPSRGKVSTDKQK. The segment at 1102-1169 is disordered; sequence EERDPSRGKV…RDPRLSKREE (68 aa). Positions 1122 to 1132 are enriched in polar residues; it reads KQNSAVNSSPR. A compositionally biased stretch (basic and acidic residues) spans 1151 to 1169; that stretch reads IRGENGKSARDPRLSKREE. The GoLoco domain occupies 1187–1209; it reads AEEFFELISKAQSNRADDQRGLL. 2 disordered regions span residues 1227 to 1318 and 1347 to 1381; these read SELA…QEGT and LMGE…TSRF. Low complexity predominate over residues 1261–1280; sequence SDSPATSPASAQSPCSAYSP. Residues 1361–1381 are compositionally biased toward pro residues; sequence LPPPPTPQDTPGPPRPGTSRF.

As to quaternary structure, interacts with GNAI1, GNAI2 and GNAI3; the interactions are GDP-dependent. In terms of tissue distribution, expressed in brain.

Its subcellular location is the nucleus. It is found in the cytoplasm. The protein localises to the cell projection. It localises to the dendrite. The protein resides in the synapse. Functionally, regulates G protein-coupled receptor signaling cascades. Inhibits signal transduction by increasing the GTPase activity of G protein alpha subunits, thereby driving them into their inactive GDP-bound form. This is Regulator of G-protein signaling 12 (Rgs12) from Mus musculus (Mouse).